Here is a 147-residue protein sequence, read N- to C-terminus: Epididymal secretory protein E3-beta (147 aa).

Residues Met-1–Ser-25 form the signal peptide.

As to expression, epididymis.

It localises to the secreted. In terms of biological role, possible function in sperm maturation. The protein is Epididymal secretory protein E3-beta (EDDM3B) of Homo sapiens (Human).